An 80-amino-acid polypeptide reads, in one-letter code: Cytochrome c oxidase subunit 7B, mitochondrial (80 aa).

The N-terminal 24 residues, 1–24, are a transit peptide targeting the mitochondrion; sequence MLPLAKNALSRLQVRSIQQVVARQ. Residues 25–32 lie on the Mitochondrial matrix side of the membrane; it reads SHQKKTPT. The helical transmembrane segment at 33 to 59 threads the bilayer; sequence FHDKYGNAVLAGGSIFCISAWTYTATQ. The Mitochondrial intermembrane segment spans residues 60–80; that stretch reads IGIEWNLSPVGRVTPKEWRDQ.

Belongs to the cytochrome c oxidase VIIb family. As to quaternary structure, component of the cytochrome c oxidase (complex IV, CIV), a multisubunit enzyme composed of 14 subunits. The complex is composed of a catalytic core of 3 subunits MT-CO1, MT-CO2 and MT-CO3, encoded in the mitochondrial DNA, and 11 supernumerary subunits COX4I, COX5A, COX5B, COX6A, COX6B, COX6C, COX7A, COX7B, COX7C, COX8 and NDUFA4, which are encoded in the nuclear genome. The complex exists as a monomer or a dimer and forms supercomplexes (SCs) in the inner mitochondrial membrane with NADH-ubiquinone oxidoreductase (complex I, CI) and ubiquinol-cytochrome c oxidoreductase (cytochrome b-c1 complex, complex III, CIII), resulting in different assemblies (supercomplex SCI(1)III(2)IV(1) and megacomplex MCI(2)III(2)IV(2)).

It is found in the mitochondrion inner membrane. The protein operates within energy metabolism; oxidative phosphorylation. Its function is as follows. Component of the cytochrome c oxidase, the last enzyme in the mitochondrial electron transport chain which drives oxidative phosphorylation. The respiratory chain contains 3 multisubunit complexes succinate dehydrogenase (complex II, CII), ubiquinol-cytochrome c oxidoreductase (cytochrome b-c1 complex, complex III, CIII) and cytochrome c oxidase (complex IV, CIV), that cooperate to transfer electrons derived from NADH and succinate to molecular oxygen, creating an electrochemical gradient over the inner membrane that drives transmembrane transport and the ATP synthase. Cytochrome c oxidase is the component of the respiratory chain that catalyzes the reduction of oxygen to water. Electrons originating from reduced cytochrome c in the intermembrane space (IMS) are transferred via the dinuclear copper A center (CU(A)) of subunit 2 and heme A of subunit 1 to the active site in subunit 1, a binuclear center (BNC) formed by heme A3 and copper B (CU(B)). The BNC reduces molecular oxygen to 2 water molecules using 4 electrons from cytochrome c in the IMS and 4 protons from the mitochondrial matrix. Plays a role in proper central nervous system (CNS) development in vertebrates. The polypeptide is Cytochrome c oxidase subunit 7B, mitochondrial (Cox7b) (Rattus norvegicus (Rat)).